The sequence spans 200 residues: Recombination protein RecR (200 aa).

Residues 57–72 form a C4-type zinc finger; sequence CRSCRTLTEEELCPQC. The region spanning 80-175 is the Toprim domain; sequence TLLCVVEGPT…VASRIAHGVP (96 aa).

Belongs to the RecR family.

May play a role in DNA repair. It seems to be involved in an RecBC-independent recombinational process of DNA repair. It may act with RecF and RecO. The chain is Recombination protein RecR from Pseudomonas savastanoi pv. phaseolicola (strain 1448A / Race 6) (Pseudomonas syringae pv. phaseolicola (strain 1448A / Race 6)).